Consider the following 588-residue polypeptide: 3-methylmercaptopropionyl-CoA dehydrogenase (588 aa).

Residue E435 is the Proton acceptor of the active site.

It belongs to the acyl-CoA dehydrogenase family. The cofactor is FAD.

It carries out the reaction 3-(methylsulfanyl)propanoyl-CoA + oxidized [electron-transfer flavoprotein] + H(+) = 3-(methylsulfanyl)acryloyl-CoA + reduced [electron-transfer flavoprotein]. In terms of biological role, involved in the assimilation of dimethylsulphoniopropionate (DMSP), an important compound in the fixation of carbon in marine phytoplankton, by mediating the conversion of 3-(methylthio)propanoyl-CoA (MMPA-CoA) to 3-(methylthio)acryloyl-CoA (MTA-CoA). This Ruegeria pomeroyi (strain ATCC 700808 / DSM 15171 / DSS-3) (Silicibacter pomeroyi) protein is 3-methylmercaptopropionyl-CoA dehydrogenase.